Consider the following 1262-residue polypeptide: Collagen alpha-1(III) chain (1262 aa).

An N-terminal signal peptide occupies residues 1 to 23 (MMSFVQKVSLFILAVFQPSVILA). A propeptide spans 24–150 (QQDALGGCTH…PSISGGSFSP (127 aa)) (N-terminal propeptide). Residues 29-88 (GGCTHLGQEYADRDVWKPEPCQICVCDSGSVLCDDIICDDQELDCPNPEIPLGECCPVCP) form the VWFC domain. Disordered regions lie at residues 95–143 (TELP…CPSI) and 160–1000 (GSVG…GGVA). Residues 102-118 (GPKGDPGSPGSPGRTGA) show a composition bias toward low complexity. Positions 119-134 (PGPPGQPGSPGAPGPP) are enriched in pro residues. Positions 145–164 (GGSFSPQYDSYDVKAGSVGM) are nonhelical region (N-terminal). Residues 165 to 994 (GYPPQPISGF…PGPSGPPGPC (830 aa)) are triple-helical region. Over residues 167-190 (PPQPISGFPGPPGPSGPPGPPGHA) the composition is skewed to pro residues. Residues 192–201 (PPGSNGYQGP) show a composition bias toward low complexity. Over residues 202-216 (PGEPGQPGPSGPPGP) the composition is skewed to pro residues. Residues 228-240 (KDGEPGRPGRNGD) show a composition bias toward basic and acidic residues. The span at 253 to 264 (PGMPGMPGMKGA) shows a compositional bias: low complexity. Lys-262 is subject to 5-hydroxylysine. Residues 265–274 (RGFDGKDGAK) are compositionally biased toward basic and acidic residues. 2 stretches are compositionally biased toward low complexity: residues 276–295 (DSGA…NGSP) and 339–376 (TAGF…QGQA). The residue at position 283 (Lys-283) is a 5-hydroxylysine. Positions 389–414 (GSPGGKGEMGPSGIPGGPGPPGGRGL) are enriched in gly residues. 2 stretches are compositionally biased toward low complexity: residues 534–549 (MRGL…SDGK) and 631–640 (PGPSGSPGLQ). Positions 641 to 650 (GLPGGPGPAG) are enriched in gly residues. Over residues 672–684 (PKGENGIPGERGP) the composition is skewed to low complexity. Residues 692–701 (GARGGPGPAG) show a composition bias toward gly residues. Composition is skewed to low complexity over residues 723 to 738 (LQGM…SPGP), 781 to 790 (TGPAGAPGPA), 802 to 817 (QGLP…PGQN), and 828 to 838 (PPGLRGEAGPP). The residue at position 859 (Lys-859) is a 5-hydroxylysine. The span at 863 to 872 (GSPGGPGAAG) shows a compositional bias: gly residues. Residues 895–904 (PGVPGPPGHP) show a composition bias toward pro residues. Residues 927–940 (PQGAIGSPGASGAR) are compositionally biased toward low complexity. Positions 976–993 (AGPPGQPGLPGPSGPPGP) are enriched in pro residues. The nonhelical region (C-terminal) stretch occupies residues 995 to 1003 (CGGGVASLG). Positions 1018–1262 (DEPKENEINL…GVDVGPVCFL (245 aa)) are cleaved as a propeptide — C-terminal propeptide. The region spanning 1028–1262 (GEIMSSMKSI…GVDVGPVCFL (235 aa)) is the Fibrillar collagen NC1 domain. 3 cysteine pairs are disulfide-bonded: Cys-1058–Cys-1090, Cys-1098–Cys-1260, and Cys-1168–Cys-1213. 5 residues coordinate Ca(2+): Asp-1076, Asn-1078, Gln-1079, Cys-1081, and Asp-1084. The N-linked (GlcNAc...) asparagine glycan is linked to Asn-1163.

Belongs to the fibrillar collagen family. Trimers of identical alpha 1(III) chains. The chains are linked to each other by interchain disulfide bonds. Trimers are also cross-linked via hydroxylysines. In terms of processing, prolines at the third position of the tripeptide repeating unit (G-X-Y) are hydroxylated in some or all of the chains.

It localises to the secreted. It is found in the extracellular space. Its subcellular location is the extracellular matrix. Its function is as follows. Collagen type III occurs in most soft connective tissues along with type I collagen. In Gallus gallus (Chicken), this protein is Collagen alpha-1(III) chain (COL3A1).